A 156-amino-acid chain; its full sequence is tRNA-specific adenosine deaminase (156 aa).

A CMP/dCMP-type deaminase domain is found at 2 to 120 (TNDIYFMTLA…GSLMNLLQQS (119 aa)). H53 is a binding site for Zn(2+). E55 serves as the catalytic Proton donor. Residues C83 and C86 each contribute to the Zn(2+) site.

The protein belongs to the cytidine and deoxycytidylate deaminase family. As to quaternary structure, homodimer. It depends on Zn(2+) as a cofactor.

The enzyme catalyses adenosine(34) in tRNA + H2O + H(+) = inosine(34) in tRNA + NH4(+). In terms of biological role, catalyzes the deamination of adenosine to inosine at the wobble position 34 of tRNA(Arg2). In Staphylococcus aureus (strain Mu50 / ATCC 700699), this protein is tRNA-specific adenosine deaminase.